The chain runs to 472 residues: Cysteine--tRNA ligase (472 aa).

Residue Cys-29 coordinates Zn(2+). Positions 31 to 41 (PTVYDFAHIGN) match the 'HIGH' region motif. Zn(2+) is bound by residues Cys-227, His-252, and Glu-256. Residues 285–289 (KMSKS) carry the 'KMSKS' region motif. Position 288 (Lys-288) interacts with ATP.

The protein belongs to the class-I aminoacyl-tRNA synthetase family. As to quaternary structure, monomer. Zn(2+) serves as cofactor.

Its subcellular location is the cytoplasm. The catalysed reaction is tRNA(Cys) + L-cysteine + ATP = L-cysteinyl-tRNA(Cys) + AMP + diphosphate. In Bradyrhizobium sp. (strain BTAi1 / ATCC BAA-1182), this protein is Cysteine--tRNA ligase.